We begin with the raw amino-acid sequence, 2633 residues long: Non-reducing polyketide synthase sor2 (2633 aa).

An N-terminal acylcarrier protein transacylase domain (SAT) region spans residues 67–237; the sequence is VSNAQKLAEW…TTSTRTVAAL (171 aa). Cys-140 acts as the Nucleophile; for transacylase activity in catalysis. The active-site Proton donor/acceptor; for transacylase activity is the His-258. Residues 389–814 form the Ketosynthase family 3 (KS3) domain; it reads ENDIAVIGMA…GSNASVIIKQ (426 aa). Active-site for beta-ketoacyl synthase activity residues include Cys-561, His-696, and His-737. Positions 928–1239 are malonyl-CoA:ACP transacylase (MAT) domain; that stretch reads CFGGQVSTFV…SKASSQLSDV (312 aa). The tract at residues 1307–1437 is N-terminal hotdog fold; that stretch reads PQPVGLYTLL…GQLHFQASDD (131 aa). The region spanning 1307–1627 is the PKS/mFAS DH domain; sequence PQPVGLYTLL…YAPVSLDQLF (321 aa). Residues 1338 to 1509 form a product template (PT) domain region; that stretch reads MSDHAIGKAQ…SNESAGRLVR (172 aa). Residues 1464–1627 form a C-terminal hotdog fold region; it reads GRSDEVIQGQ…YAPVSLDQLF (164 aa). The region spanning 1684–1758 is the Carrier domain; sequence EELWLRLRPV…GILKFLQSTL (75 aa). Residue Ser-1718 is modified to O-(pantetheine 4'-phosphoryl)serine. The tract at residues 1762–1792 is disordered; it reads DVHDSSETMSTVSSDGNVHSPPTSGSEMASP. The segment covering 1768–1790 has biased composition (polar residues); that stretch reads ETMSTVSSDGNVHSPPTSGSEMA. The tract at residues 1982–2166 is methyltransferase domain; it reads FELMADFLTR…ASGFKHVRWT (185 aa). The NADPH-binding (R) domain stretch occupies residues 2253 to 2495; that stretch reads VTGATGSLGS…TLRALPDVDG (243 aa).

Pantetheine 4'-phosphate serves as cofactor.

It participates in secondary metabolite biosynthesis. Non-reducing polyketide synthase; part of the SOR gene cluster that mediates the biosynthesis of sorbicillinoids, a diverse group of yellow secondary metabolites that restrict growth of competing pathogenic fungi but not of bacteria. Sorbicillinoids biosynthesis requires the action of two PKSs. The SOR cluster is required for the production of trichodimerol and dihydrotrichotetronin, with sor2 being sufficient for production of trichodimerol, but not dihydrotrichotetronin in the light. Sor1 iteratively combines three acetyl units and the growing chain is modified by the ketoacyl reductase subunit, and optional by the enoyl reductase subunit in the second cycle. The polyketide is then handed over to the PKS sor2, which adds three more acetyl units, and two methyl groups. Sor2 releases an aldehyde, which undergoes spontaneous cyclization resulting in the formation of sorbicillin or 2',3'-dihydrosorbicillin. The monooxygenase sor5 oxidizes sorbicillin and 2',3'-dihydrosorbicillin to 2',3'-dihydrosorbicillinol and sorbicillinol, respectively. The oxidoreductase sor8 further converts sorbicillinol into oxosorbicillinol. Sorbicillinol is the building block for the other sorbicillinoids such as disorbicillinol, bisvertinolon, dihydrobisvertinolone, and dihydrotrichotetronine. The chain is Non-reducing polyketide synthase sor2 from Hypocrea jecorina (strain QM6a) (Trichoderma reesei).